A 474-amino-acid polypeptide reads, in one-letter code: MNSPSESRVPSSLTQDPSFTASPALLQGIWNSTQNISVRVQLLSVSPTTPGLQAAAWVPFPTVDVPDHAHYTLGTVILLVGLTGMLGNLTVIYTFCRNRGLRTPANMLIINLAVSDFLMSFTQAPVFFASSLYKKWLFGETGCKFYAFCGAVFGIVSMITLTAIAMDRYLVITRPLATIGMRSKRRTALVLLGVWLYALAWSLPPFFGWSAYVPEGLLTSCSWDYVTFTPLVRAYTMLLFCFVFFLPLLIIIFCYIFIFRAIRETGRACEGCGESPLRRRQWQRLQSEWKMAKVALIVILLFVLSWAPYSTVALVGFAGYSHILTPYMSSVPAVIAKASAIHNPIIYAITHPKYRAAIAQHLPCLGVLLGVSGQRSHPSLSYRSTHRSTLSSQSSDLSWISGQKRQESLGSESEVGWTDTETTAAWGAAQQASGQSFCSHDLEDGEVKAPSSPQEQKSKTPKTKRHLPSLDRRM.

Residues 1–72 (MNSPSESRVP…VDVPDHAHYT (72 aa)) lie on the Extracellular side of the membrane. N31 and N35 each carry an N-linked (GlcNAc...) asparagine glycan. The chain crosses the membrane as a helical span at residues 73 to 93 (LGTVILLVGLTGMLGNLTVIY). Over 94-107 (TFCRNRGLRTPANM) the chain is Cytoplasmic. The helical transmembrane segment at 108 to 128 (LIINLAVSDFLMSFTQAPVFF) threads the bilayer. Residues 129-144 (ASSLYKKWLFGETGCK) are Extracellular-facing. Residues C143 and C221 are joined by a disulfide bond. The helical transmembrane segment at 145-165 (FYAFCGAVFGIVSMITLTAIA) threads the bilayer. Residues 166–188 (MDRYLVITRPLATIGMRSKRRTA) are Cytoplasmic-facing. The chain crosses the membrane as a helical span at residues 189–209 (LVLLGVWLYALAWSLPPFFGW). Topologically, residues 210–238 (SAYVPEGLLTSCSWDYVTFTPLVRAYTML) are extracellular. Residues 239–259 (LFCFVFFLPLLIIIFCYIFIF) traverse the membrane as a helical segment. Topologically, residues 260–293 (RAIRETGRACEGCGESPLRRRQWQRLQSEWKMAK) are cytoplasmic. Residues 294–314 (VALIVILLFVLSWAPYSTVAL) form a helical membrane-spanning segment. The Extracellular portion of the chain corresponds to 315–355 (VGFAGYSHILTPYMSSVPAVIAKASAIHNPIIYAITHPKYR). K337 is subject to N6-(retinylidene)lysine. The chain crosses the membrane as a helical span at residues 356-372 (AAIAQHLPCLGVLLGVS). At 373 to 474 (GQRSHPSLSY…RHLPSLDRRM (102 aa)) the chain is on the cytoplasmic side. The interval 428–474 (AAQQASGQSFCSHDLEDGEVKAPSSPQEQKSKTPKTKRHLPSLDRRM) is disordered.

This sequence belongs to the G-protein coupled receptor 1 family. Opsin subfamily. Eye; expressed in a photosensitive subset of retinal ganglion cells (at protein level).

The protein localises to the cell membrane. The protein resides in the cell projection. It localises to the axon. It is found in the dendrite. Its subcellular location is the perikaryon. In terms of biological role, photoreceptor that binds cis-retinaldehydes. Contributes to pupillar reflex, photoentrainment and other non-image forming responses to light. May be involved in the optokinetic visual tracking response. May be involved in the regulation of retinal hyaloid vessel growth and regression. This Rattus norvegicus (Rat) protein is Melanopsin.